Consider the following 59-residue polypeptide: Ribosome modulation factor (59 aa).

The protein belongs to the ribosome modulation factor family.

It localises to the cytoplasm. During stationary phase, converts 70S ribosomes to an inactive dimeric form (100S ribosomes). In Aeromonas veronii (strain B565), this protein is Ribosome modulation factor.